A 252-amino-acid polypeptide reads, in one-letter code: Neurexophilin-3 (252 aa).

The N-terminal stretch at 1–22 (MQLTRCCFVFLVQGSLYLVICG) is a signal peptide. An II region spans residues 23 to 75 (QEDGPPGSEDPEHDDHEGQPRPRVPRKRGHISPKSRPLANSTLLGLLAPPGEV). Residues 27–59 (PPGSEDPEHDDHEGQPRPRVPRKRGHISPKSRP) are disordered. Residues 45 to 55 (RVPRKRGHISP) show a composition bias toward basic residues. N-linked (GlcNAc...) asparagine glycosylation is found at N62, N127, N137, and N143. Residues 76 to 157 (WGILGQPPNR…LVPPSKAVEF (82 aa)) are III. Residues 158–166 (HQEQQIFIE) form an IV (linker domain) region. Residues 167–252 (AKASKIFNCR…HSDTPYYPSG (86 aa)) are v (Cys-rich).

This sequence belongs to the neurexophilin family. May be proteolytically processed at the boundary between the N-terminal non-conserved and the central conserved domain in neuron-like cells. In terms of tissue distribution, brain. Detected in several other tissues.

Its subcellular location is the secreted. Functionally, may be signaling molecules that resemble neuropeptides. Ligand for alpha-neurexins. This is Neurexophilin-3 (Nxph3) from Rattus norvegicus (Rat).